The chain runs to 200 residues: Glutathione S-transferase 1-1 (200 aa).

Residues 1 to 73 enclose the GST N-terminal domain; that stretch reads GSSPCRSVIM…YLVEKYGKTD (73 aa). Glutathione contacts are provided by residues serine 2, 43–45, and 57–59; these read HTI and ESR. Residues 79–200 enclose the GST C-terminal domain; that stretch reads CPKKRAVINQ…AGCLEFKKFF (122 aa).

Belongs to the GST superfamily. Theta family. As to quaternary structure, homodimer.

The enzyme catalyses RX + glutathione = an S-substituted glutathione + a halide anion + H(+). It catalyses the reaction 1,1,1-trichloro-2,2-bis(4-chlorophenyl)ethane = 1,1-dichloro-2,2-bis(4-chlorophenyl)ethylene + chloride + H(+). Its function is as follows. Conjugation of reduced glutathione to a wide number of exogenous and endogenous hydrophobic electrophiles. Has DDT dehydrochlorinase activity. The chain is Glutathione S-transferase 1-1 (GstD1) from Drosophila mauritiana (Fruit fly).